Consider the following 784-residue polypeptide: Toll-like receptor 2 (784 aa).

The signal sequence occupies residues Met-1 to Glu-20. The Extracellular portion of the chain corresponds to Glu-21–Arg-587. A disulfide bridge connects residues Cys-30 and Cys-36. LRR repeat units lie at residues Val-54–Asn-77, Leu-78–Arg-101, Leu-102–Ser-125, Leu-126–Lys-150, Leu-151–Phe-175, Leu-176–Asn-199, Val-200–Ser-223, Val-224–Leu-250, Ile-251–Gly-278, Leu-279–Lys-308, Val-309–Arg-337, Val-338–Ser-361, Leu-362–Ser-388, Leu-389–Asn-414, Leu-415–Lys-437, Met-438–Lys-457, Thr-458–Gln-478, Leu-479–Met-500, and Leu-501–Thr-524. Asn-114 is a glycosylation site (N-linked (GlcNAc...) asparagine). An N-linked (GlcNAc...) asparagine glycan is attached at Asn-199. An intrachain disulfide couples Cys-353 to Cys-382. A glycan (N-linked (GlcNAc...) asparagine) is linked at Asn-414. A disulfide bond links Cys-432 and Cys-454. Residue Asn-442 is glycosylated (N-linked (GlcNAc...) asparagine). Positions Leu-525–Arg-579 constitute an LRRCT domain. A helical transmembrane segment spans residues Ala-588–Leu-608. The Cytoplasmic portion of the chain corresponds to Cys-609–Ser-784. The region spanning Ile-639 to Ile-782 is the TIR domain. Lys-754 participates in a covalent cross-link: Glycyl lysine isopeptide (Lys-Gly) (interchain with G-Cter in ubiquitin). An ATG16L1-binding motif motif is present at residues Tyr-761–Leu-778.

It belongs to the Toll-like receptor family. As to quaternary structure, interacts with LY96, TLR1 and TLR6 (via extracellular domain). TLR2 seems to exist in heterodimers with either TLR1 or TLR6 before stimulation by the ligand. The heterodimers form bigger oligomers in response to their corresponding ligands as well as further heterotypic associations with other receptors such as CD14 and/or CD36. Binds MYD88 (via TIR domain). Interacts with TICAM1. Interacts with CNPY3. Interacts with ATG16L1. Interacts with PPP1R11. Interacts with TICAM2. Interacts with TIRAP. In terms of processing, ubiquitinated at Lys-754 by PPP1R11, leading to its degradation. Deubiquitinated by USP2. Glycosylation of Asn-442 is critical for secretion of the N-terminal ectodomain of TLR2.

It is found in the membrane. The protein resides in the cytoplasmic vesicle. Its subcellular location is the phagosome membrane. It localises to the membrane raft. Functionally, cooperates with LY96 to mediate the innate immune response to bacterial lipoproteins and other microbial cell wall components. Cooperates with TLR1 or TLR6 to mediate the innate immune response to bacterial lipoproteins or lipopeptides. Acts via MYD88 and TRAF6, leading to NF-kappa-B activation, cytokine secretion and the inflammatory response. May also promote apoptosis in response to lipoproteins. Forms activation clusters composed of several receptors depending on the ligand, these clusters trigger signaling from the cell surface and subsequently are targeted to the Golgi in a lipid-raft dependent pathway. Forms the cluster TLR2:TLR6:CD14:CD36 in response to diacylated lipopeptides and TLR2:TLR1:CD14 in response to triacylated lipopeptides. The sequence is that of Toll-like receptor 2 (TLR2) from Macaca mulatta (Rhesus macaque).